We begin with the raw amino-acid sequence, 162 residues long: HTH-type transcriptional regulator IscR (162 aa).

Residues 2 to 131 (RLTSKGRYAV…NNITLGELVN (130 aa)) form the HTH rrf2-type domain. Positions 28–51 (LADISERQGISLSYLEQLFSRLRK) form a DNA-binding region, H-T-H motif. 3 residues coordinate [2Fe-2S] cluster: cysteine 92, cysteine 98, and cysteine 104. Positions 141 to 162 (RQHNEAHRPTRAQDAIDVKLRA) are disordered.

[2Fe-2S] cluster serves as cofactor.

Its function is as follows. Regulates the transcription of several operons and genes involved in the biogenesis of Fe-S clusters and Fe-S-containing proteins. The chain is HTH-type transcriptional regulator IscR from Cronobacter sakazakii (strain ATCC BAA-894) (Enterobacter sakazakii).